A 336-amino-acid chain; its full sequence is Probable GTPase MT1543 (336 aa).

GTP is bound by residues 67–75 (GVPGVGKST), Asp209, and 245–247 (SAV).

It belongs to the SIMIBI class G3E GTPase family. ArgK/MeaB subfamily. In terms of assembly, homodimer.

Its function is as follows. Probable GTPase. May also bind and hydrolyze ATP. May function as chaperone. This chain is Probable GTPase MT1543, found in Mycobacterium tuberculosis (strain CDC 1551 / Oshkosh).